The primary structure comprises 974 residues: Pentatricopeptide repeat-containing protein At5g61990, mitochondrial (974 aa).

A mitochondrion-targeting transit peptide spans 1 to 31 (MMGSMLFRKRTLVTRANFLLFRSFSVNVEKL). 24 PPR repeats span residues 96 to 130 (KLDS…NWPV), 150 to 184 (DGVL…ELVP), 185 to 219 (RLSR…NVVF), 220 to 250 (DVKT…TEKE), 257 to 275 (NVDG…GLVP), 276 to 310 (LKYT…GVSL), 311 to 345 (DNHT…GINI), 346 to 380 (KPYM…GLIP), 381 to 415 (QAQA…NIVI), 416 to 450 (SPYT…GCRP), 451 to 485 (NVVI…GIAP), 486 to 520 (DIFC…GLKP), 521 to 555 (NAFT…GVLP), 556 to 590 (NKVL…GILG), 591 to 625 (DAKT…GIAP), 626 to 660 (DVFS…GLTP), 661 to 695 (NVII…GLHP), 696 to 730 (NAVT…GLVP), 731 to 761 (DSFV…NKKG), 765 to 799 (STAP…SFDR), 804 to 838 (NDVT…NLMP), 839 to 873 (TVIT…GIEP), 874 to 908 (DHIM…NAVD), and 914 to 948 (SIST…QYIP).

It belongs to the PPR family. P subfamily.

It is found in the mitochondrion. The chain is Pentatricopeptide repeat-containing protein At5g61990, mitochondrial from Arabidopsis thaliana (Mouse-ear cress).